The following is a 553-amino-acid chain: Arginine--tRNA ligase (553 aa).

Residues 132 to 140 (PTGDLHIGH) carry the 'HIGH' region motif.

This sequence belongs to the class-I aminoacyl-tRNA synthetase family. In terms of assembly, monomer.

It is found in the cytoplasm. The catalysed reaction is tRNA(Arg) + L-arginine + ATP = L-arginyl-tRNA(Arg) + AMP + diphosphate. The protein is Arginine--tRNA ligase of Staphylococcus aureus (strain Mu50 / ATCC 700699).